The sequence spans 293 residues: MTENNDIKMVIITGMSGAGKTVALQSFEDLGYFCVDNLPPMLLPKFIELMADSKGKMNKVALGIDLRGREFFEHLWGALDDLSERTWIIPHILFLDAKDSTLVTRYKETRRSHPLAPTGLPLKGIEAERDLLTDMKARANIVLDTSDLKPKELREKIVHLFSTETEQAFRVNVMSFGFKYGIPIDADLVFDVRFLPNPYYIPHMKPLTGLDEEVSSYVLKFNETHKFLEKLTDLITFMLPHYKREGKSQLVIAIGCTGGQHRSVTLTEYLGKHLKPEYSVHVSHRDVEKRKGH.

14-21 (GMSGAGKT) serves as a coordination point for ATP. 65-68 (DLRG) provides a ligand contact to GTP.

The protein belongs to the RapZ-like family.

Functionally, displays ATPase and GTPase activities. In Bacillus cereus (strain G9842), this protein is Nucleotide-binding protein BCG9842_B5683.